Reading from the N-terminus, the 130-residue chain is Fumarate reductase subunit C (130 aa).

3 helical membrane-spanning segments follow: residues 34–54 (VPAV…KGGV), 60–80 (FVGF…LLAA), and 109–129 (IVKT…AVAL).

The protein belongs to the FrdC family. In terms of assembly, part of an enzyme complex containing four subunits: a flavoprotein (FrdA), an iron-sulfur protein (FrdB), and two hydrophobic anchor proteins (FrdC and FrdD).

It is found in the cell inner membrane. Functionally, two distinct, membrane-bound, FAD-containing enzymes are responsible for the catalysis of fumarate and succinate interconversion; fumarate reductase is used in anaerobic growth, and succinate dehydrogenase is used in aerobic growth. Anchors the catalytic components of the fumarate reductase complex to the cell inner membrane, binds quinones. In Serratia proteamaculans (strain 568), this protein is Fumarate reductase subunit C.